The sequence spans 408 residues: Aspartate aminotransferase, cytoplasmic (408 aa).

The L-aspartate site is built by Gly-36, Trp-133, and Asn-187. Residue Lys-251 is modified to N6-(pyridoxal phosphate)lysine. Arg-379 contacts L-aspartate.

This sequence belongs to the class-I pyridoxal-phosphate-dependent aminotransferase family. As to quaternary structure, homodimer. The cofactor is pyridoxal 5'-phosphate. As to expression, expressed in all somatic tissues including the nervous system.

Its subcellular location is the cytoplasm. The catalysed reaction is L-aspartate + 2-oxoglutarate = oxaloacetate + L-glutamate. Its function is as follows. Biosynthesis of L-glutamate from L-aspartate. Important regulator of levels of glutamate, the major excitatory neurotransmitter of the central nervous system. This chain is Aspartate aminotransferase, cytoplasmic, found in Caenorhabditis elegans.